The chain runs to 647 residues: uncharacterized protein (647 aa).

This is an uncharacterized protein from Cryphonectria parasitica mycoreovirus 1 (strain 9B21) (CpMYRV-1).